The following is a 605-amino-acid chain: Isocitrate dehydrogenase kinase/phosphatase (605 aa).

ATP is bound by residues 353 to 359 (APGFKGT) and Lys-374. Asp-413 is a catalytic residue.

It belongs to the AceK family.

The protein resides in the cytoplasm. The enzyme catalyses L-seryl-[isocitrate dehydrogenase] + ATP = O-phospho-L-seryl-[isocitrate dehydrogenase] + ADP + H(+). In terms of biological role, bifunctional enzyme which can phosphorylate or dephosphorylate isocitrate dehydrogenase (IDH) on a specific serine residue. This is a regulatory mechanism which enables bacteria to bypass the Krebs cycle via the glyoxylate shunt in response to the source of carbon. When bacteria are grown on glucose, IDH is fully active and unphosphorylated, but when grown on acetate or ethanol, the activity of IDH declines drastically concomitant with its phosphorylation. In Rhodopseudomonas palustris (strain HaA2), this protein is Isocitrate dehydrogenase kinase/phosphatase.